Here is a 106-residue protein sequence, read N- to C-terminus: 1-deoxy-D-xylulose 5-phosphate reductoisomerase (106 aa).

Asp3 provides a ligand contact to Mn(2+). Ser4, Glu5, Ser29, His52, Ser65, Asn70, Lys71, and Glu74 together coordinate 1-deoxy-D-xylulose 5-phosphate. Glu5 serves as a coordination point for Mn(2+). Residue Glu74 participates in Mn(2+) binding.

This sequence belongs to the DXR family. Mn(2+) is required as a cofactor. Requires Mg(2+) as cofactor.

It localises to the plastid. It is found in the chloroplast stroma. The enzyme catalyses 2-C-methyl-D-erythritol 4-phosphate + NADP(+) = 1-deoxy-D-xylulose 5-phosphate + NADPH + H(+). It functions in the pathway isoprenoid biosynthesis; isopentenyl diphosphate biosynthesis via DXP pathway; isopentenyl diphosphate from 1-deoxy-D-xylulose 5-phosphate: step 1/6. Enzyme of the plastid non-mevalonate pathway for isoprenoid biosynthesis that catalyzes the NADPH-dependent rearrangement and reduction of 1-deoxy-D-xylulose-5-phosphate (DXP) to 2-C-methyl-D-erythritol 4-phosphate (MEP). Required for chloroplast development. This is 1-deoxy-D-xylulose 5-phosphate reductoisomerase from Origanum vulgare (Wild marjoram).